The primary structure comprises 116 residues: Urease subunit beta (116 aa).

Residues 97–116 (IQGPLDAGTAETAPGLPQQP) form a disordered region.

The protein belongs to the urease beta subunit family. Heterotrimer of UreA (gamma), UreB (beta) and UreC (alpha) subunits. Three heterotrimers associate to form the active enzyme.

The protein localises to the cytoplasm. The catalysed reaction is urea + 2 H2O + H(+) = hydrogencarbonate + 2 NH4(+). It participates in nitrogen metabolism; urea degradation; CO(2) and NH(3) from urea (urease route): step 1/1. This is Urease subunit beta from Paracidovorax citrulli (strain AAC00-1) (Acidovorax citrulli).